A 133-amino-acid chain; its full sequence is Small ribosomal subunit protein uS11 (133 aa).

It belongs to the universal ribosomal protein uS11 family. As to quaternary structure, part of the 30S ribosomal subunit. Interacts with proteins S7 and S18. Binds to IF-3.

Functionally, located on the platform of the 30S subunit, it bridges several disparate RNA helices of the 16S rRNA. Forms part of the Shine-Dalgarno cleft in the 70S ribosome. The protein is Small ribosomal subunit protein uS11 of Brevibacillus brevis (strain 47 / JCM 6285 / NBRC 100599).